Reading from the N-terminus, the 176-residue chain is Large ribosomal subunit protein uL10 (176 aa).

Belongs to the universal ribosomal protein uL10 family. As to quaternary structure, part of the ribosomal stalk of the 50S ribosomal subunit. The N-terminus interacts with L11 and the large rRNA to form the base of the stalk. The C-terminus forms an elongated spine to which L12 dimers bind in a sequential fashion forming a multimeric L10(L12)X complex.

Its function is as follows. Forms part of the ribosomal stalk, playing a central role in the interaction of the ribosome with GTP-bound translation factors. This chain is Large ribosomal subunit protein uL10, found in Mycobacteroides abscessus (strain ATCC 19977 / DSM 44196 / CCUG 20993 / CIP 104536 / JCM 13569 / NCTC 13031 / TMC 1543 / L948) (Mycobacterium abscessus).